A 418-amino-acid chain; its full sequence is Odorant receptor 13a (418 aa).

The Cytoplasmic segment spans residues 1 to 38; it reads MFYSYPYKALSFPIQCVWLKLNGSWPLTESSRPWRSQS. The helical transmembrane segment at 39–59 threads the bilayer; sequence LLATAYIVWAWYVIASVGITI. At 60–70 the chain is on the extracellular side; it reads SYQTAFLLNNL. N-linked (GlcNAc...) asparagine glycosylation occurs at N69. The helical transmembrane segment at 71-91 threads the bilayer; sequence SDIIITTENCCTTFMGVLNFV. The Cytoplasmic portion of the chain corresponds to 92-140; that stretch reads RLIHLRLNQRKFRQLIENFSYEIWIPNSSKNNVAAECRRRMVTFSIMTS. Residues 141–161 form a helical membrane-spanning segment; that stretch reads LLACLIIMYCVLPLVEIFFGP. Residues 162–195 lie on the Extracellular side of the membrane; that stretch reads AFDAQNKPFPYKMIFPYDAQSSWIRYVMTYIFTS. A helical transmembrane segment spans residues 196 to 216; sequence YAGICVVTTLFAEDTILGFFI. Residues 217 to 273 are Cytoplasmic-facing; that stretch reads TYTCGQFHLLHQRIAGLFAGSNAELAESIQLERLKRIVEKHNNIISFAKRLEDFFNP. A helical transmembrane segment spans residues 274–294; the sequence is ILLANLMISSVLICMVGFQIV. Residues 295 to 299 are Extracellular-facing; that stretch reads TGKNM. A helical membrane pass occupies residues 300–320; sequence FIGDYVKFIIYISSALSQLYV. At 321-385 the chain is on the cytoplasmic side; it reads LCENGDALIK…PVRITAFKFS (65 aa). Residues 386-406 traverse the membrane as a helical segment; sequence TLSLQSFTAILSTSISYFTLL. Residues 407–418 lie on the Extracellular side of the membrane; it reads RSVYFDDEKKLD.

This sequence belongs to the insect chemoreceptor superfamily. Heteromeric odorant receptor channel (TC 1.A.69) family. Or1a subfamily. Interacts with Orco. Complexes exist early in the endomembrane system in olfactory sensory neurons (OSNs), coupling these complexes to the conserved ciliary trafficking pathway. In terms of tissue distribution, expressed in olfactory sensory neurons in the antenna.

It is found in the cell membrane. In terms of biological role, odorant receptor which mediates acceptance or avoidance behavior, depending on its substrates. The odorant receptor repertoire encodes a large collection of odor stimuli that vary widely in identity, intensity, and duration. May form a complex with Orco to form odorant-sensing units, providing sensitive and prolonged odorant signaling and calcium permeability. Involved in the behavioral responses to octanol, nonanol, and pentyl acetate. The sequence is that of Odorant receptor 13a (Or13a) from Drosophila melanogaster (Fruit fly).